The chain runs to 515 residues: MSYPQFGYPYSSAPQFLMTTNSLSTCCESGGRTLADSGPAASAQAPVYCPVYESRLLATARHELNSAAALGVYGSPYGSSQGYGNYVTYGSEASAFYSLNSFESKDGTGSSHAGLPPTAAAAYYPYEPALSQYPYDRYGTVDSGTRRKNATRETTSTLKAWLQEHRKNPYPTKGEKIMLAIITKMTLTQVSTWFANARRRLKKENKMTWPPRNKCADEKRPYGEGEEEEAGEEESREEPLKSAKSEGHAGKDDKELELSDLEDFDPLDAETSECELKTPFQSLDSGPERIPASSDGPGTGKEASTTLRMPLGTAGGAVMDGDLERARNCLRSTVVVPDSGAEGGPPACEAKLTFAQAGAPPNLETKPRIWSLAHTATAAAATALSQTEFPSCMLKRQGPTGVSATTPASSPAVTAPSGALDRHQDSPVTSLRNWVDGVFHDPILRHSTLNQAWATAKGALLDPGPLGRNLGAGTNVLTTPLACSFPPTVPQDVPPAGASRELLATPKAGGKPFCT.

A DNA-binding region (homeobox; TALE-type) is located at residues 144 to 205 (GTRRKNATRE…NARRRLKKEN (62 aa)). Disordered stretches follow at residues 205–258 (NKMT…ELEL), 278–307 (TPFQ…STTL), and 398–425 (GPTG…RHQD). Residues 214–223 (KCADEKRPYG) show a composition bias toward basic and acidic residues. A compositionally biased stretch (acidic residues) spans 224–236 (EGEEEEAGEEESR). Residues 237-257 (EEPLKSAKSEGHAGKDDKELE) are compositionally biased toward basic and acidic residues. The span at 399 to 419 (PTGVSATTPASSPAVTAPSGA) shows a compositional bias: low complexity.

Belongs to the TALE/IRO homeobox family. As to quaternary structure, interacts with the vitamin D receptor VDR but doesn't affect its transactivation activity. In terms of tissue distribution, expressed in the developing central nervous system, skin, and vibrissae, but predominantly expressed in the cardiac ventricles of the developing heart. Not expressed in the developing metanephric kidney or adult kidney.

Its subcellular location is the nucleus. In terms of biological role, likely to be an important mediator of ventricular differentiation during cardiac development. The polypeptide is Iroquois-class homeodomain protein IRX-4 (Irx4) (Mus musculus (Mouse)).